The following is a 134-amino-acid chain: UPF0102 protein Dshi_2830 (134 aa).

The protein belongs to the UPF0102 family.

The chain is UPF0102 protein Dshi_2830 from Dinoroseobacter shibae (strain DSM 16493 / NCIMB 14021 / DFL 12).